Consider the following 194-residue polypeptide: Ribonuclease HII (194 aa).

The RNase H type-2 domain maps to 3 to 193 (ILTAGVDEAG…VRNLLAQQAL (191 aa)). Residues D9, E10, and D101 each contribute to the a divalent metal cation site.

Belongs to the RNase HII family. Mn(2+) is required as a cofactor. Requires Mg(2+) as cofactor.

Its subcellular location is the cytoplasm. It catalyses the reaction Endonucleolytic cleavage to 5'-phosphomonoester.. Endonuclease that specifically degrades the RNA of RNA-DNA hybrids. This chain is Ribonuclease HII (rnhB), found in Neisseria meningitidis serogroup B (strain ATCC BAA-335 / MC58).